Reading from the N-terminus, the 652-residue chain is Probable export ATP-binding/permease protein PFL_2149 (652 aa).

In terms of domain architecture, ABC transporter spans Leu-6 to Arg-244. Gly-42–Ser-49 contacts ATP. Transmembrane regions (helical) follow at residues Leu-251 to Ser-271, Leu-277 to Gly-297, Leu-525 to Met-545, Ile-586 to Ile-606, and Met-615 to Val-635.

The protein belongs to the ABC transporter superfamily. Macrolide exporter (TC 3.A.1.122) family. As to quaternary structure, probably part of a tripartite efflux system, which is composed of an inner membrane transporter, a periplasmic membrane fusion protein, and an outer membrane component.

The protein resides in the cell inner membrane. Probably part of a tripartite efflux system. The sequence is that of Probable export ATP-binding/permease protein PFL_2149 from Pseudomonas fluorescens (strain ATCC BAA-477 / NRRL B-23932 / Pf-5).